The sequence spans 92 residues: Small ribosomal subunit protein uS19c (92 aa).

The protein belongs to the universal ribosomal protein uS19 family.

The protein resides in the plastid. Its subcellular location is the chloroplast. Protein S19 forms a complex with S13 that binds strongly to the 16S ribosomal RNA. The sequence is that of Small ribosomal subunit protein uS19c (rps19) from Picea abies (Norway spruce).